The primary structure comprises 169 residues: E1B protein, small T-antigen (169 aa).

It belongs to the adenoviridae E1B 19 kDa protein family.

The polypeptide is E1B protein, small T-antigen (Canine adenovirus serotype 1 (strain CLL) (CAdV-1)).